Here is a 480-residue protein sequence, read N- to C-terminus: Phenolic acid decarboxylase (480 aa).

Mn(2+) is bound by residues Asn163, His185, and Glu227. Prenylated FMN contacts are provided by residues 163-168 (NVGTYR) and 184-185 (MH). Glu278 serves as the catalytic Proton donor. A disordered region spans residues 443–466 (TTPVPPEPNPRETQLLDPPDGTEE).

Belongs to the UbiD family. YclC subfamily. As to quaternary structure, homohexamer. Requires prenylated FMN as cofactor. The cofactor is Mn(2+).

It catalyses the reaction 4-hydroxybenzoate + H(+) = phenol + CO2. It carries out the reaction 3,4-dihydroxybenzoate + H(+) = catechol + CO2. Its activity is regulated as follows. Inhibited by Zn(2+), (2,3,4)-trihydroxybenzoate and (3,4,5)-trihydroxybenzoate. Ammonium and rubidium ions decrease the activity of the carboxylation of 3,4-dihydroxybenzoate by about 20%. In terms of biological role, involved in the non-oxidative decarboxylation and detoxification of phenolic derivatives under anaerobic conditions. Oxygen-sensitive phenolic acid decarboxylase that catalyzes the reversible decarboxylation of 4-hydroxybenzoate and 3,4-dihydroxybenzoate. The sequence is that of Phenolic acid decarboxylase from Sedimentibacter hydroxybenzoicus (Clostridium hydroxybenzoicum).